We begin with the raw amino-acid sequence, 165 residues long: Endoribonuclease YbeY (165 aa).

Zn(2+) contacts are provided by His-119, His-123, and His-129.

It belongs to the endoribonuclease YbeY family. The cofactor is Zn(2+).

The protein localises to the cytoplasm. Single strand-specific metallo-endoribonuclease involved in late-stage 70S ribosome quality control and in maturation of the 3' terminus of the 16S rRNA. The sequence is that of Endoribonuclease YbeY from Streptomyces coelicolor (strain ATCC BAA-471 / A3(2) / M145).